Reading from the N-terminus, the 358-residue chain is Uroporphyrinogen decarboxylase (358 aa).

Substrate is bound by residues 29 to 33, phenylalanine 48, aspartate 79, tyrosine 155, serine 210, and histidine 330; that span reads RQAGR.

This sequence belongs to the uroporphyrinogen decarboxylase family. As to quaternary structure, homodimer.

It localises to the cytoplasm. It carries out the reaction uroporphyrinogen III + 4 H(+) = coproporphyrinogen III + 4 CO2. It participates in porphyrin-containing compound metabolism; protoporphyrin-IX biosynthesis; coproporphyrinogen-III from 5-aminolevulinate: step 4/4. In terms of biological role, catalyzes the decarboxylation of four acetate groups of uroporphyrinogen-III to yield coproporphyrinogen-III. The sequence is that of Uroporphyrinogen decarboxylase from Bordetella pertussis (strain Tohama I / ATCC BAA-589 / NCTC 13251).